The primary structure comprises 285 residues: uncharacterized protein (285 aa).

The HTH araC/xylS-type domain maps to 184–282; that stretch reads HSICNWVQDN…GLTPGEYSAR (99 aa). DNA-binding regions (H-T-H motif) lie at residues 201–222 and 249–272; these read ESVAQFFNITPNHLSKLFAQHG and IHEVAQRCGFPDSDYFCRVFRRQF.

This is an uncharacterized protein from Escherichia coli (strain K12).